Here is a 396-residue protein sequence, read N- to C-terminus: 1-deoxy-D-xylulose 5-phosphate reductoisomerase (396 aa).

The NADPH site is built by threonine 15, glycine 16, isoleucine 18, and asparagine 127. Residue lysine 128 coordinates 1-deoxy-D-xylulose 5-phosphate. Glutamate 129 serves as a coordination point for NADPH. Aspartate 153 provides a ligand contact to Mn(2+). Positions 154, 155, 177, and 200 each coordinate 1-deoxy-D-xylulose 5-phosphate. Residue glutamate 155 participates in Mn(2+) binding. Glycine 206 is a binding site for NADPH. 1-deoxy-D-xylulose 5-phosphate-binding residues include serine 213, asparagine 218, lysine 219, and glutamate 222. Position 222 (glutamate 222) interacts with Mn(2+).

This sequence belongs to the DXR family. It depends on Mg(2+) as a cofactor. Requires Mn(2+) as cofactor.

The catalysed reaction is 2-C-methyl-D-erythritol 4-phosphate + NADP(+) = 1-deoxy-D-xylulose 5-phosphate + NADPH + H(+). Its pathway is isoprenoid biosynthesis; isopentenyl diphosphate biosynthesis via DXP pathway; isopentenyl diphosphate from 1-deoxy-D-xylulose 5-phosphate: step 1/6. Catalyzes the NADPH-dependent rearrangement and reduction of 1-deoxy-D-xylulose-5-phosphate (DXP) to 2-C-methyl-D-erythritol 4-phosphate (MEP). The protein is 1-deoxy-D-xylulose 5-phosphate reductoisomerase of Anaplasma marginale (strain Florida).